The sequence spans 326 residues: DNA-binding death effector domain-containing protein 2 (326 aa).

Residues 25–104 enclose the DED domain; it reads SLHRMFEVVG…RHDLLPHLAR (80 aa). Positions 104–109 match the Nuclear localization signal motif; it reads RKRRRP. A disordered region spans residues 104 to 194; the sequence is RKRRRPVSPE…PARPSSEGKV (91 aa). A compositionally biased stretch (low complexity) spans 136–146; it reads SSSSANSQQGQ. The Bipartite nuclear localization signal signature appears at 155-173; sequence KRQRRSRGRPSGGARRRRR. Residues 155 to 174 show a composition bias toward basic residues; that stretch reads KRQRRSRGRPSGGARRRRRG. The segment covering 175–191 has biased composition (low complexity); it reads APAAPQQQSEPARPSSE.

Interacts with CASP8, CASP10 and GTF3C3. Homodimerizes and heterodimerizes with DEDD. In terms of tissue distribution, expressed in most tissues. High levels were found in liver, kidney, heart, ovary, spleen, testes, skeletal muscle and peripheral blood leukocytes. Expression was absent or low in colon and small intestine. Expression is relatively high in the tumor cell lines chronic myologenous leukemia K-562 and the colorectal adenocarcinoma SW480. Expression is moderate in the cervical carcinoma HeLa, the Burkitt's lymphoma Raji, the lung carcinoma A-549, and the melanoma G-361. In contrast, two leukemia cell lines, HL-60 (promyelocytic leukemia) and MOLT-4 (lymphoblastic leukemia), show relatively low levels.

It is found in the nucleus. The protein resides in the nucleolus. Its function is as follows. May play a critical role in death receptor-induced apoptosis and may target CASP8 and CASP10 to the nucleus. May regulate degradation of intermediate filaments during apoptosis. May play a role in the general transcription machinery in the nucleus and might be an important regulator of the activity of GTF3C3. This is DNA-binding death effector domain-containing protein 2 (DEDD2) from Homo sapiens (Human).